We begin with the raw amino-acid sequence, 468 residues long: Tissue alpha-L-fucosidase (468 aa).

An N-terminal signal peptide occupies residues 1–29; the sequence is MRAPGERWRPAGAALWLLLLLLLLGATES. Thr-172 carries the post-translational modification Phosphothreonine. N-linked (GlcNAc...) asparagine glycans are attached at residues Asn-243, Asn-270, and Asn-384.

The protein belongs to the glycosyl hydrolase 29 family. In terms of assembly, homotetramer.

It is found in the lysosome. The enzyme catalyses an alpha-L-fucoside + H2O = L-fucose + an alcohol. The catalysed reaction is a neolactoside IV(2)-alpha-Fuc-nLc4Cer(d18:1(4E)) + H2O = a neolactoside nLc4Cer(d18:1(4E)) + L-fucose. It carries out the reaction a neolactoside IV(2)-alpha-Fuc-nLc4Cer(d18:0) + H2O = a neolactoside nLc4Cer(d18:0) + L-fucose. Its function is as follows. Alpha-L-fucosidase is responsible for hydrolyzing the alpha-1,6-linked fucose joined to the reducing-end N-acetylglucosamine of the carbohydrate moieties of glycoproteins. The chain is Tissue alpha-L-fucosidase (FUCA1) from Macaca fascicularis (Crab-eating macaque).